We begin with the raw amino-acid sequence, 473 residues long: Ribulose bisphosphate carboxylase large chain (473 aa).

The propeptide occupies Met-1–Ser-2. Pro-3 carries the post-translational modification N-acetylproline. Residue Lys-14 is modified to N6,N6,N6-trimethyllysine. Residues Asn-123 and Thr-173 each coordinate substrate. Lys-175 functions as the Proton acceptor in the catalytic mechanism. Lys-177 contacts substrate. The Mg(2+) site is built by Lys-201, Asp-203, and Glu-204. Position 201 is an N6-carboxylysine (Lys-201). His-294 functions as the Proton acceptor in the catalytic mechanism. The substrate site is built by Arg-295, His-327, and Ser-379.

This sequence belongs to the RuBisCO large chain family. Type I subfamily. Heterohexadecamer of 8 large chains and 8 small chains; disulfide-linked. The disulfide link is formed within the large subunit homodimers. It depends on Mg(2+) as a cofactor. Post-translationally, the disulfide bond which can form in the large chain dimeric partners within the hexadecamer appears to be associated with oxidative stress and protein turnover.

Its subcellular location is the plastid. The protein localises to the chloroplast. It catalyses the reaction 2 (2R)-3-phosphoglycerate + 2 H(+) = D-ribulose 1,5-bisphosphate + CO2 + H2O. It carries out the reaction D-ribulose 1,5-bisphosphate + O2 = 2-phosphoglycolate + (2R)-3-phosphoglycerate + 2 H(+). RuBisCO catalyzes two reactions: the carboxylation of D-ribulose 1,5-bisphosphate, the primary event in carbon dioxide fixation, as well as the oxidative fragmentation of the pentose substrate in the photorespiration process. Both reactions occur simultaneously and in competition at the same active site. The polypeptide is Ribulose bisphosphate carboxylase large chain (Monarda didyma (Scarlet bee-balm)).